We begin with the raw amino-acid sequence, 319 residues long: Phosphate acyltransferase (319 aa).

It belongs to the PlsX family. Homodimer. Probably interacts with PlsY.

The protein localises to the cytoplasm. It catalyses the reaction a fatty acyl-[ACP] + phosphate = an acyl phosphate + holo-[ACP]. The protein operates within lipid metabolism; phospholipid metabolism. Functionally, catalyzes the reversible formation of acyl-phosphate (acyl-PO(4)) from acyl-[acyl-carrier-protein] (acyl-ACP). This enzyme utilizes acyl-ACP as fatty acyl donor, but not acyl-CoA. The polypeptide is Phosphate acyltransferase (Chlamydia muridarum (strain MoPn / Nigg)).